Reading from the N-terminus, the 302-residue chain is Deoxyhypusine hydroxylase (302 aa).

6 HEAT-like PBS-type repeats span residues 23-49 (ERFR…AFDD), 54-80 (LKHE…VLKD), 87-113 (VRHE…YKQD), 175-201 (DRYR…GLKD), 206-232 (FRHE…NLED), and 239-265 (VRHE…YAED). The Fe cation site is built by histidine 56, glutamate 57, histidine 89, and glutamate 90. 4 residues coordinate Fe cation: histidine 208, glutamate 209, histidine 241, and glutamate 242.

The protein belongs to the deoxyhypusine hydroxylase family. Requires Fe(2+) as cofactor.

It is found in the endoplasmic reticulum membrane. It catalyses the reaction [eIF5A protein]-deoxyhypusine + AH2 + O2 = [eIF5A protein]-hypusine + A + H2O. It functions in the pathway protein modification; eIF5A hypusination. Functionally, catalyzes the hydroxylation of the N(6)-(4-aminobutyl)-L-lysine intermediate to form hypusine, an essential post-translational modification only found in mature eIF-5A factor. Essential for organismal viability and plays a role in a wide number of important processes such as cell growth and proliferation, and regulates induction of autophagy and protein synthesis. Has a role in eIF-5A-mediated translational control. The protein is Deoxyhypusine hydroxylase of Drosophila melanogaster (Fruit fly).